A 156-amino-acid chain; its full sequence is Mitochondrial translation release factor in rescue (156 aa).

A GGQ domain region spans residues 44–108 (EEELEEQFVR…LREKLEVAYK (65 aa)). A GGQ motif is present at residues 58 to 60 (GGQ). Positions 100–141 (REKLEVAYKGEESELLKMKKESMQKKQDKRRKVNENIEKKRR) form a coiled coil. 2 stretches are compositionally biased toward basic and acidic residues: residues 114–125 (LLKMKKESMQKK) and 132–156 (VNEN…DKST). The disordered stretch occupies residues 114-156 (LLKMKKESMQKKQDKRRKVNENIEKKRRFKEMLNSKQEDDKST).

The protein belongs to the prokaryotic/mitochondrial release factor family. Interacts (via C-terminus) with MTRES1 (via S4 domain). Associates with mitoribosomal S39 large subunit, peptidyl tRNA and nascent chain.

The protein localises to the mitochondrion. Functionally, part of a mitoribosome-associated quality control pathway that prevents aberrant translation by responding to interruptions during elongation. As heterodimer with MTRES1, ejects the unfinished nascent chain and peptidyl transfer RNA (tRNA), respectively, from stalled ribosomes. Recruitment of mitoribosome biogenesis factors to these quality control intermediates suggests additional roles for MTRES1 and MTRF during mitoribosome rescue. This is Mitochondrial translation release factor in rescue (mtrfr) from Danio rerio (Zebrafish).